A 611-amino-acid chain; its full sequence is Aspartate--tRNA(Asp/Asn) ligase (611 aa).

Glu-174 lines the L-aspartate pocket. The aspartate stretch occupies residues 198-201 (QLFK). Residue Arg-220 coordinates L-aspartate. Residues 220–222 (RDE) and Gln-229 contribute to the ATP site. His-467 lines the L-aspartate pocket. Glu-501 is an ATP binding site. Arg-508 contacts L-aspartate. 553–556 (GLDR) contributes to the ATP binding site.

The protein belongs to the class-II aminoacyl-tRNA synthetase family. Type 1 subfamily. As to quaternary structure, homodimer.

The protein resides in the cytoplasm. It carries out the reaction tRNA(Asx) + L-aspartate + ATP = L-aspartyl-tRNA(Asx) + AMP + diphosphate. In terms of biological role, aspartyl-tRNA synthetase with relaxed tRNA specificity since it is able to aspartylate not only its cognate tRNA(Asp) but also tRNA(Asn). Reaction proceeds in two steps: L-aspartate is first activated by ATP to form Asp-AMP and then transferred to the acceptor end of tRNA(Asp/Asn). This is Aspartate--tRNA(Asp/Asn) ligase from Albidiferax ferrireducens (strain ATCC BAA-621 / DSM 15236 / T118) (Rhodoferax ferrireducens).